A 151-amino-acid chain; its full sequence is Large ribosomal subunit protein bL9 (151 aa).

This sequence belongs to the bacterial ribosomal protein bL9 family.

Functionally, binds to the 23S rRNA. This chain is Large ribosomal subunit protein bL9, found in Carboxydothermus hydrogenoformans (strain ATCC BAA-161 / DSM 6008 / Z-2901).